Consider the following 2998-residue polypeptide: Probable polyketide synthase 14 (2998 aa).

The 438-residue stretch at 19-456 folds into the Ketosynthase family 3 (KS3) domain; sequence EDDIAIIGIG…GSNCCLILSE (438 aa). Residues Cys-189, His-331, and His-376 each act as for beta-ketoacyl synthase activity in the active site. The tract at residues 657–690 is acyl/malonyl transferase; it reads GIEASFIVGHSLGEIPAAYCSGMITLDTLCYLIY. Ser-667 (for acyl/malonyl transferase activity) is an active-site residue. Residues 962 to 1084 are N-terminal hotdog fold; it reads IDQLGFSLIE…GNFQLFTSGN (123 aa). The PKS/mFAS DH domain maps to 962-1249; that stretch reads IDQLGFSLIE…CKSLTIIKDS (288 aa). The active-site Proton acceptor; for dehydratase activity is the His-996. Residues 1101 to 1249 are C-terminal hotdog fold; sequence NLTKLTKNEL…CKSLTIIKDS (149 aa). The active-site Proton donor; for dehydratase activity is the Asp-1159. Residues 1979 to 1999 traverse the membrane as a helical segment; the sequence is SILIHSGSGGIGLSALNILKW. Residues 2476–2553 form the Carrier domain; that stretch reads ENDTSIDSLF…SSIKLITNQL (78 aa). The residue at position 2513 (Ser-2513) is an O-(pantetheine 4'-phosphoryl)serine. Residues 2559–2578 are disordered; it reads DGQQQQHRQNKKNNNIPENK. Residues 2561 to 2573 show a composition bias toward low complexity; sequence QQQQHRQNKKNNN. The helical transmembrane segment at 2621–2641 threads the bilayer; that stretch reads IFLTGSTGFLGAYLLWYLIQM.

Pantetheine 4'-phosphate is required as a cofactor.

It localises to the membrane. Functionally, probable polyketide synthase. The protein is Probable polyketide synthase 14 (pks14) of Dictyostelium discoideum (Social amoeba).